Consider the following 132-residue polypeptide: UPF0212 protein PYRAB08340 (132 aa).

Belongs to the UPF0212 family.

This chain is UPF0212 protein PYRAB08340, found in Pyrococcus abyssi (strain GE5 / Orsay).